The chain runs to 250 residues: MSTTMREMLEAGVHFGHQTRFWNPKMAPFIFGHRNKIHIINLEKSLPMFQDAMKYAKQLTANRGTILMVGTKRQAREIVAAEARRAGVPFVDTRWLGGMLTNFKTVKTSIKRLKDMKAQQEAGLDSLSKKEQLTFTREIEKLEKDIGGIQDMTALPDAIFVIDVGFHKIAVAEAKKLGIPLIGVVDSNHSPEGIDYVIPGNDDSSKAVTLYARGIADAIIEGRNSATGDVVKAIAEGSDEFVEVEEGASA.

The protein belongs to the universal ribosomal protein uS2 family.

This chain is Small ribosomal subunit protein uS2, found in Variovorax paradoxus (strain S110).